The primary structure comprises 251 residues: Ubiquinone/menaquinone biosynthesis C-methyltransferase UbiE (251 aa).

Residues threonine 74, aspartate 95, and 123-124 each bind S-adenosyl-L-methionine; that span reads NA.

Belongs to the class I-like SAM-binding methyltransferase superfamily. MenG/UbiE family.

It catalyses the reaction a 2-demethylmenaquinol + S-adenosyl-L-methionine = a menaquinol + S-adenosyl-L-homocysteine + H(+). The enzyme catalyses a 2-methoxy-6-(all-trans-polyprenyl)benzene-1,4-diol + S-adenosyl-L-methionine = a 5-methoxy-2-methyl-3-(all-trans-polyprenyl)benzene-1,4-diol + S-adenosyl-L-homocysteine + H(+). It functions in the pathway quinol/quinone metabolism; menaquinone biosynthesis; menaquinol from 1,4-dihydroxy-2-naphthoate: step 2/2. Its pathway is cofactor biosynthesis; ubiquinone biosynthesis. In terms of biological role, methyltransferase required for the conversion of demethylmenaquinol (DMKH2) to menaquinol (MKH2) and the conversion of 2-polyprenyl-6-methoxy-1,4-benzoquinol (DDMQH2) to 2-polyprenyl-3-methyl-6-methoxy-1,4-benzoquinol (DMQH2). The sequence is that of Ubiquinone/menaquinone biosynthesis C-methyltransferase UbiE from Shewanella baltica (strain OS223).